The following is a 101-amino-acid chain: Co-chaperonin GroES 1 (101 aa).

The protein belongs to the GroES chaperonin family. As to quaternary structure, heptamer of 7 subunits arranged in a ring. Interacts with the chaperonin GroEL.

The protein resides in the cytoplasm. Its function is as follows. Together with the chaperonin GroEL, plays an essential role in assisting protein folding. The GroEL-GroES system forms a nano-cage that allows encapsulation of the non-native substrate proteins and provides a physical environment optimized to promote and accelerate protein folding. GroES binds to the apical surface of the GroEL ring, thereby capping the opening of the GroEL channel. The chain is Co-chaperonin GroES 1 from Rhodopirellula baltica (strain DSM 10527 / NCIMB 13988 / SH1).